Reading from the N-terminus, the 728-residue chain is Myb-related protein A (728 aa).

Positions 1–31 (MAGRARSEDEEEDGQFTEHDYDVSLQKGPKK) are disordered. 3 consecutive HTH myb-type domains span residues 30–80 (KKPW…HKVL), 81–136 (SPEL…NPDV), and 137–187 (KKSS…KRKV). 3 consecutive DNA-binding regions (H-T-H motif) follow at residues 57-80 (WGVV…HKVL), 109-132 (WSII…HNHL), and 160-183 (WAEI…NSTM). The segment at 230–293 (IPRYSSLSHD…RKRVPSGSSL (64 aa)) is transcriptional activation domain. The negative regulatory domain stretch occupies residues 296 to 534 (SESYHMGESM…IRRSLMAVTP (239 aa)).

Component of the DREAM complex.

It localises to the nucleus. Functionally, transcription factor that specifically recognizes the sequence 5'-YAAC[GT]G-3'. Acts as a master regulator of male meiosis by promoting expression of piRNAs. The piRNA metabolic process mediates the repression of transposable elements during meiosis by forming complexes composed of piRNAs and Piwi proteins and governs the methylation and subsequent repression of transposons, which is essential for the germline integrity. The polypeptide is Myb-related protein A (mybl1) (Xenopus laevis (African clawed frog)).